The primary structure comprises 137 residues: Methylglyoxal synthase (137 aa).

The MGS-like domain maps to 1-137 (MKIALIAHDR…NIVHGRDRDA (137 aa)). Substrate-binding positions include H8, K12, 34–37 (TGTT), and 54–55 (SG). The active-site Proton donor/acceptor is D60. Position 87 (H87) interacts with substrate.

This sequence belongs to the methylglyoxal synthase family.

It catalyses the reaction dihydroxyacetone phosphate = methylglyoxal + phosphate. Functionally, catalyzes the formation of methylglyoxal from dihydroxyacetone phosphate. The chain is Methylglyoxal synthase from Bacillus licheniformis (strain ATCC 14580 / DSM 13 / JCM 2505 / CCUG 7422 / NBRC 12200 / NCIMB 9375 / NCTC 10341 / NRRL NRS-1264 / Gibson 46).